Reading from the N-terminus, the 618-residue chain is 1-deoxy-D-xylulose-5-phosphate synthase (618 aa).

Thiamine diphosphate is bound by residues H70 and G111–S113. D142 serves as a coordination point for Mg(2+). Thiamine diphosphate is bound by residues G143–S144, N171, Y278, and E360. Mg(2+) is bound at residue N171.

The protein belongs to the transketolase family. DXPS subfamily. In terms of assembly, homodimer. Mg(2+) serves as cofactor. It depends on thiamine diphosphate as a cofactor.

It catalyses the reaction D-glyceraldehyde 3-phosphate + pyruvate + H(+) = 1-deoxy-D-xylulose 5-phosphate + CO2. Its pathway is metabolic intermediate biosynthesis; 1-deoxy-D-xylulose 5-phosphate biosynthesis; 1-deoxy-D-xylulose 5-phosphate from D-glyceraldehyde 3-phosphate and pyruvate: step 1/1. In terms of biological role, catalyzes the acyloin condensation reaction between C atoms 2 and 3 of pyruvate and glyceraldehyde 3-phosphate to yield 1-deoxy-D-xylulose-5-phosphate (DXP). In Helicobacter pylori (strain HPAG1), this protein is 1-deoxy-D-xylulose-5-phosphate synthase.